Consider the following 205-residue polypeptide: MDLKLLNDQGQAATFSAPDTIFGRDFNEALVHQIVVAFQANARSGNRAQKDRAEVKHSTKKPWRQKGTGRARAGMTSSPLWRGGGRAFPNSPEENFSQKVNKKMYRAGIRSILSQLAREDRVAVVDTFTLESPKTKLAAAKLKSLGLDSVLIITDNVDENVYLATRNLPYVAVVEPRYADPLSLIHYKKVLITKPAIAQLEEMLG.

A disordered region spans residues 43–95; it reads RSGNRAQKDRAEVKHSTKKPWRQKGTGRARAGMTSSPLWRGGGRAFPNSPEEN. Basic and acidic residues predominate over residues 48 to 57; sequence AQKDRAEVKH. The segment covering 58–69 has biased composition (basic residues); sequence STKKPWRQKGTG.

Belongs to the universal ribosomal protein uL4 family. As to quaternary structure, part of the 50S ribosomal subunit.

Its function is as follows. One of the primary rRNA binding proteins, this protein initially binds near the 5'-end of the 23S rRNA. It is important during the early stages of 50S assembly. It makes multiple contacts with different domains of the 23S rRNA in the assembled 50S subunit and ribosome. Forms part of the polypeptide exit tunnel. The chain is Large ribosomal subunit protein uL4 from Bordetella pertussis (strain Tohama I / ATCC BAA-589 / NCTC 13251).